Reading from the N-terminus, the 422-residue chain is Metallocarboxypeptidase A (422 aa).

The N-terminal stretch at 1-17 (MRSVLSLALLAANVVTA) is a signal peptide. A propeptide spans 18-112 (AVVSPFDYSG…FEAYSAGYAP (95 aa)) (activation peptide). In terms of domain architecture, Peptidase M14 spans 119–419 (SYHSYQDHIS…AGTVAMLKAV (301 aa)). H179 and E182 together coordinate Zn(2+). Substrate-binding positions include 179-182 (HARE), R237, and 254-255 (NR). C248 and C271 are oxidised to a cystine. H309 lines the Zn(2+) pocket. 310–311 (SY) is a substrate binding site. Catalysis depends on E385, which acts as the Proton donor/acceptor.

The protein belongs to the peptidase M14 family. Requires Zn(2+) as cofactor.

Its subcellular location is the secreted. Extracellular metalloprotease that contributes to pathogenicity. The polypeptide is Metallocarboxypeptidase A (MCPA) (Trichophyton tonsurans (Scalp ringworm fungus)).